Here is a 220-residue protein sequence, read N- to C-terminus: Phosphatidylserine decarboxylase proenzyme (220 aa).

The active-site Schiff-base intermediate with substrate; via pyruvic acid is serine 188. A Pyruvic acid (Ser); by autocatalysis modification is found at serine 188.

This sequence belongs to the phosphatidylserine decarboxylase family. PSD-A subfamily. Heterodimer of a large membrane-associated beta subunit and a small pyruvoyl-containing alpha subunit. Pyruvate is required as a cofactor. In terms of processing, is synthesized initially as an inactive proenzyme. Formation of the active enzyme involves a self-maturation process in which the active site pyruvoyl group is generated from an internal serine residue via an autocatalytic post-translational modification. Two non-identical subunits are generated from the proenzyme in this reaction, and the pyruvate is formed at the N-terminus of the alpha chain, which is derived from the carboxyl end of the proenzyme. The post-translation cleavage follows an unusual pathway, termed non-hydrolytic serinolysis, in which the side chain hydroxyl group of the serine supplies its oxygen atom to form the C-terminus of the beta chain, while the remainder of the serine residue undergoes an oxidative deamination to produce ammonia and the pyruvoyl prosthetic group on the alpha chain.

The protein resides in the cell membrane. The catalysed reaction is a 1,2-diacyl-sn-glycero-3-phospho-L-serine + H(+) = a 1,2-diacyl-sn-glycero-3-phosphoethanolamine + CO2. Its pathway is phospholipid metabolism; phosphatidylethanolamine biosynthesis; phosphatidylethanolamine from CDP-diacylglycerol: step 2/2. Its function is as follows. Catalyzes the formation of phosphatidylethanolamine (PtdEtn) from phosphatidylserine (PtdSer). The chain is Phosphatidylserine decarboxylase proenzyme from Parabacteroides distasonis (strain ATCC 8503 / DSM 20701 / CIP 104284 / JCM 5825 / NCTC 11152).